The sequence spans 153 residues: Prefoldin subunit alpha (153 aa).

This sequence belongs to the prefoldin subunit alpha family. As to quaternary structure, heterohexamer of two alpha and four beta subunits.

The protein localises to the cytoplasm. Molecular chaperone capable of stabilizing a range of proteins. Seems to fulfill an ATP-independent, HSP70-like function in archaeal de novo protein folding. The chain is Prefoldin subunit alpha from Methanothrix thermoacetophila (strain DSM 6194 / JCM 14653 / NBRC 101360 / PT) (Methanosaeta thermophila).